We begin with the raw amino-acid sequence, 109 residues long: Anti-sigma-B factor antagonist (109 aa).

The STAS domain maps to 3 to 109; it reads INVDVKQNEN…ISAKSEGGVQ (107 aa). Residues S52 and S56 each carry the phosphoserine modification. T57 bears the Phosphothreonine mark.

Belongs to the anti-sigma-factor antagonist family. In terms of assembly, monomer. In stressed cells, forms a complex with RsbW. The predominant form of this complex has a stoichiometry of 2:2 (one dimer of RsbW is bound by two monomers of RsbV). Binds to RsbW in the presence of low levels of ATP or under conditions of energy or environmental stress (through dephosphorylation by RsbP or RsbU). Post-translationally, phosphorylated by RsbW on a serine residue. Dephosphorylated by RsbP or RsbU.

Positive regulator of sigma-B activity. Non-phosphorylated RsbV binds to RsbW, preventing its association with sigma-B. When phosphorylated, releases RsbW, which is then free to complex with and inactivate sigma-B. This Bacillus subtilis (strain 168) protein is Anti-sigma-B factor antagonist (rsbV).